The following is a 258-amino-acid chain: MPKVSIVEKSQFFAKAVVEGVPPSLINSLRRVIISELPVLAIDSVVVVNNTSVMYDEMLAHRLGLIPLTTPLKDLPPIEDCESGLVDPSECTVRLTLQVNATGDVVVYAGDLVADRPDVAPVYKDIPIVKLVEGQSVVVEAYAKLGRARDHAKWQAALASYYYYPKVVVKREECREMCKEVCRNLENPLECTFNKATTCKEMCGGGIVVEWEKDKYVFWIESFGNYDAETALREAFRILKKKFEDFLDALSRKAEAKL.

Belongs to the archaeal Rpo3/eukaryotic RPB3 RNA polymerase subunit family. As to quaternary structure, part of the RNA polymerase complex.

Its subcellular location is the cytoplasm. The enzyme catalyses RNA(n) + a ribonucleoside 5'-triphosphate = RNA(n+1) + diphosphate. DNA-dependent RNA polymerase (RNAP) catalyzes the transcription of DNA into RNA using the four ribonucleoside triphosphates as substrates. This Pyrobaculum calidifontis (strain DSM 21063 / JCM 11548 / VA1) protein is DNA-directed RNA polymerase subunit Rpo3.